An 835-amino-acid chain; its full sequence is Prickle-like protein 1-A (835 aa).

The PET domain maps to 14–122; the sequence is FGCQRSSTSD…NIKMLSRAVM (109 aa). LIM zinc-binding domains lie at 124-188, 189-249, and 250-313; these read ATCE…ELLK, PRCS…HYAE, and YCES…EDVH. Disordered regions lie at residues 312–346, 426–455, 603–706, and 769–835; these read VHAS…ADQC, LFQQ…QRNN, CQEK…RKRS, and CSSS…CIIS. Composition is skewed to basic and acidic residues over residues 432–453, 603–614, and 646–655; these read EDNR…DLQR, CQEKPPPEEKPM, and EIRRPPMSER. Composition is skewed to basic residues over residues 669–683 and 819–835; these read RPHH…KSRK and SKSK…CIIS. C832 carries the post-translational modification Cysteine methyl ester. C832 carries the S-farnesyl cysteine lipid modification. Positions 833 to 835 are cleaved as a propeptide — removed in mature form; that stretch reads IIS.

The protein belongs to the prickle / espinas / testin family. Interacts with dvl2/dsh and mapk8/jnk1. Expressed in the dorsal marginal zone of early gastrulae (stage 10). As gastrulation proceeds, expression expands to include the lateral and ventral marginal zones, excluding the few rows of cells above the blastopore lip. Expression moves dorsally with gastrulation cell movements, and by the end of gastrulation expression is seen in dorsal mesoderm and posterior but not anterior neural ectoderm. Expression becomes down-regulated in mesoderm but remains strong in posterior ectoderm through the neurula stages. During tailbud stages, expressed in the pronephric duct, tailbud, tailtip and forming somites. In the most posterior regions, expressed in notochord and in the floorplate of the neural tube with weak expression in the roofplate. At stage 30, expressed in a complex pattern in the head including strong expression in the lens and otic vesicle.

The protein localises to the cell membrane. Its function is as follows. Acts in a planar cell polarity (PCP) complex; polarization along the apical/basal axis of epithelial cells. Regulates the polarized assembly of fibronectrin on the surface of the mesoderm during gastrulation. Essential for gastrulation cell movements, cooperating with dvl2/dsh to activate jnk. Acts together with tes to control axial elongation. The chain is Prickle-like protein 1-A (prickle1-a) from Xenopus laevis (African clawed frog).